Consider the following 413-residue polypeptide: Tryptophan synthase beta chain (413 aa).

The residue at position 106 (Lys106) is an N6-(pyridoxal phosphate)lysine.

Belongs to the TrpB family. As to quaternary structure, tetramer of two alpha and two beta chains. It depends on pyridoxal 5'-phosphate as a cofactor.

The enzyme catalyses (1S,2R)-1-C-(indol-3-yl)glycerol 3-phosphate + L-serine = D-glyceraldehyde 3-phosphate + L-tryptophan + H2O. It functions in the pathway amino-acid biosynthesis; L-tryptophan biosynthesis; L-tryptophan from chorismate: step 5/5. Its function is as follows. The beta subunit is responsible for the synthesis of L-tryptophan from indole and L-serine. This chain is Tryptophan synthase beta chain, found in Methylorubrum populi (strain ATCC BAA-705 / NCIMB 13946 / BJ001) (Methylobacterium populi).